The chain runs to 426 residues: Cell adhesion molecule CEACAM16 (426 aa).

The first 22 residues, M1–A22, serve as a signal peptide directing secretion. An N-linked (GlcNAc...) asparagine glycan is attached at N38. Residues E77–D96 are disordered. A compositionally biased stretch (basic and acidic residues) spans T84–L95. Ig-like C2-type domains are found at residues P134–T219 and P224–V310. A disulfide bond links C155 and C202. An N-linked (GlcNAc...) asparagine glycan is attached at N217. A disulfide bridge links C253 with C294.

It belongs to the immunoglobulin superfamily. CEA family. As to quaternary structure, homooligomer; can for homodimers and homotetramers. Interacts with TECTA and TECTB. In terms of tissue distribution, expressed in cochlear outer hair cells (OHC).

It is found in the secreted. Functionally, required for proper hearing, plays a role in maintaining the integrity of the tectorial membrane. The sequence is that of Cell adhesion molecule CEACAM16 from Mus musculus (Mouse).